The following is a 130-amino-acid chain: Small ribosomal subunit protein uS8 (130 aa).

The protein belongs to the universal ribosomal protein uS8 family.

This Paracentrotus lividus (Common sea urchin) protein is Small ribosomal subunit protein uS8 (RPS15A).